The following is a 182-amino-acid chain: Large ribosomal subunit protein uL10 (182 aa).

It belongs to the universal ribosomal protein uL10 family. In terms of assembly, part of the ribosomal stalk of the 50S ribosomal subunit. The N-terminus interacts with L11 and the large rRNA to form the base of the stalk. The C-terminus forms an elongated spine to which L12 dimers bind in a sequential fashion forming a multimeric L10(L12)X complex.

Functionally, forms part of the ribosomal stalk, playing a central role in the interaction of the ribosome with GTP-bound translation factors. The chain is Large ribosomal subunit protein uL10 from Chloroflexus aurantiacus (strain ATCC 29364 / DSM 637 / Y-400-fl).